The primary structure comprises 188 residues: Elongation factor P (188 aa).

The protein belongs to the elongation factor P family.

The protein resides in the cytoplasm. It participates in protein biosynthesis; polypeptide chain elongation. Involved in peptide bond synthesis. Stimulates efficient translation and peptide-bond synthesis on native or reconstituted 70S ribosomes in vitro. Probably functions indirectly by altering the affinity of the ribosome for aminoacyl-tRNA, thus increasing their reactivity as acceptors for peptidyl transferase. The sequence is that of Elongation factor P from Phenylobacterium zucineum (strain HLK1).